A 277-amino-acid polypeptide reads, in one-letter code: Intercellular adhesion molecule 2 (277 aa).

Residues M1–E22 form the signal peptide. At K23 to Q222 the chain is on the extracellular side. 2 Ig-like C2-type domains span residues T39–K98 and G127–R196. Residues N45, N82, N158, N176, and N186 are each glycosylated (N-linked (GlcNAc...) asparagine). 3 disulfide bridges follow: C46–C91, C50–C95, and C134–C189. A helical transmembrane segment spans residues M223–F247. Topologically, residues G248–V277 are cytoplasmic. Residues H250–V277 are required for interaction with EZR, MSN and RDX and co-localization to microvilli.

It belongs to the immunoglobulin superfamily. ICAM family. As to quaternary structure, interacts with RDX, EZR and MSN. In terms of tissue distribution, expressed in endothelial cells and leukocytes. High levels found in lung.

The protein localises to the membrane. The protein resides in the cell projection. It is found in the microvillus. Its function is as follows. ICAM proteins are ligands for the leukocyte adhesion protein LFA-1 (integrin alpha-L/beta-2). ICAM2 may play a role in lymphocyte recirculation by blocking LFA-1-dependent cell adhesion. It mediates adhesive interactions important for antigen-specific immune response, NK-cell mediated clearance, lymphocyte recirculation, and other cellular interactions important for immune response and surveillance. In Mus musculus (Mouse), this protein is Intercellular adhesion molecule 2 (Icam2).